A 118-amino-acid polypeptide reads, in one-letter code: NADH-quinone oxidoreductase subunit A (118 aa).

3 helical membrane-spanning segments follow: residues 5–25, 61–81, and 90–110; these read FAAV…MMLM, FLYA…FPWA, and FAFI…WYAW.

This sequence belongs to the complex I subunit 3 family. NDH-1 is composed of 14 different subunits. Subunits NuoA, H, J, K, L, M, N constitute the membrane sector of the complex.

The protein resides in the cell membrane. It carries out the reaction a quinone + NADH + 5 H(+)(in) = a quinol + NAD(+) + 4 H(+)(out). NDH-1 shuttles electrons from NADH, via FMN and iron-sulfur (Fe-S) centers, to quinones in the respiratory chain. The immediate electron acceptor for the enzyme in this species is believed to be a menaquinone. Couples the redox reaction to proton translocation (for every two electrons transferred, four hydrogen ions are translocated across the cytoplasmic membrane), and thus conserves the redox energy in a proton gradient. The protein is NADH-quinone oxidoreductase subunit A of Desulfitobacterium hafniense (strain Y51).